The sequence spans 254 residues: MESYIIDTYQGVPYTAAVQVDLIEKDSNPATLTVWFPLFQSSTPAPVLLDQLKTLSITTQYTASPEGPVLQVNAAAQGAAMSALPKKFAVSAAVALDEYSRLEFGTLTVCDVRSIYLTTLKPYGMVSKIMTDVRSVGRKTHDLIALCDFIDIEKGVPITIPAYIKAVSIKDSESATVEAAISGEADQAITQARIAPYAGLILIMTMNNPKGIFKKLGAGMQVIVELGPYVQAESLGKICKTWNHQRTRYVLRSR.

The protein belongs to the pneumovirinae M protein family. Forms dimers. Forms higher-order oligomers. Interacts with glycoprotein G (via N-terminus). Interacts with protein M2-1; this interaction directs the matrix protein localization to cytoplasmic inclusions comprising viral proteins L, N, P, and M2-1 and mediates the matrix protein association with the nucleocapsid.

The protein resides in the virion. Its subcellular location is the host cytoplasm. The protein localises to the host nucleus. It is found in the host cell membrane. Its function is as follows. Plays a crucial role in virus assembly into filaments and budding. Early in infection, localizes in the nucleus where it may inhibit host cell transcription. Later in infection, traffics to the cytoplasm to associate with inclusion bodies, the site of viral transcription and replication. During virus assembly and budding, acts as a bridge between the nucleocapsid and the lipid bilayer. The protein is Matrix protein (M) of Meleagris gallopavo (Wild turkey).